A 248-amino-acid polypeptide reads, in one-letter code: Triosephosphate isomerase (248 aa).

9-11 (NWK) is a binding site for substrate. His-94 serves as the catalytic Electrophile. Residue Glu-166 is the Proton acceptor of the active site. Substrate is bound by residues Gly-172, Ser-212, and 233-234 (GG).

This sequence belongs to the triosephosphate isomerase family. In terms of assembly, homodimer.

The protein localises to the cytoplasm. The catalysed reaction is D-glyceraldehyde 3-phosphate = dihydroxyacetone phosphate. Its pathway is carbohydrate biosynthesis; gluconeogenesis. The protein operates within carbohydrate degradation; glycolysis; D-glyceraldehyde 3-phosphate from glycerone phosphate: step 1/1. Involved in the gluconeogenesis. Catalyzes stereospecifically the conversion of dihydroxyacetone phosphate (DHAP) to D-glyceraldehyde-3-phosphate (G3P). This is Triosephosphate isomerase from Clostridium botulinum (strain Langeland / NCTC 10281 / Type F).